The sequence spans 158 residues: NAD(P)H-quinone oxidoreductase subunit J, chloroplastic (158 aa).

This sequence belongs to the complex I 30 kDa subunit family. In terms of assembly, NDH is composed of at least 16 different subunits, 5 of which are encoded in the nucleus.

It is found in the plastid. It localises to the chloroplast thylakoid membrane. It catalyses the reaction a plastoquinone + NADH + (n+1) H(+)(in) = a plastoquinol + NAD(+) + n H(+)(out). The catalysed reaction is a plastoquinone + NADPH + (n+1) H(+)(in) = a plastoquinol + NADP(+) + n H(+)(out). Its function is as follows. NDH shuttles electrons from NAD(P)H:plastoquinone, via FMN and iron-sulfur (Fe-S) centers, to quinones in the photosynthetic chain and possibly in a chloroplast respiratory chain. The immediate electron acceptor for the enzyme in this species is believed to be plastoquinone. Couples the redox reaction to proton translocation, and thus conserves the redox energy in a proton gradient. The protein is NAD(P)H-quinone oxidoreductase subunit J, chloroplastic of Ranunculus macranthus (Large buttercup).